A 555-amino-acid chain; its full sequence is MSIQTVSFQSFTDQKPGTSGLRKKVKVFQQPNYSESFITSILLSIPEGAKDAFLVIGGDGRYYNPEAIQKIAKISAAYGVKKLLVGQNGILSTPAASNLIRVRKATGGILLTASHNPGGPNADFGIKYNLSNGAPAPETVTNKIYETSKTLTSYNYAEIPELDLSSIGSKTYGPLEVEVVHSTSDYVKMMKEIFDFDLIKEFLNTHKDFKVLFDGMHGVTGPYGVDIFVNELGLPSSSTMNCVPSPDFNGGHPDPNLVYAHELVEAVDKNGIHFGAASDGDGDRNMIYGANTFVSPGDSLAIISHHAKLIPYFQKQGVYGLARSMPTSGAVDLVAKAQGLQSYEVPTGWKFFCNLFDNKKISICGEESFGTGSNHIREKDGLWAIVAWLNIIAGVAKEKPDQTPSIASIQNDFWQAYGRTFFTRYDYENVDSDGANKVIAILSDKVANKDSFVGSTVSGRKVTDVGNFSYTDLDGSVSKNQGLYAKFDDGSRIIVRLSGTGSSGATIRLYIEKYESDKSKFGLTASEYLKDNVALALSLLNFKEFIGREEPDVRT.

Alpha-D-glucose 1,6-bisphosphate contacts are provided by Arg22 and Ser114. Catalysis depends on Ser114, which acts as the Phosphoserine intermediate. Mg(2+) contacts are provided by Ser114, Asp279, Asp281, and Asp283. Ser114 carries the post-translational modification Phosphoserine. The alpha-D-glucose 1,6-bisphosphate site is built by Asp283, Arg284, Thr347, Glu366, Ser368, and Lys379.

This sequence belongs to the phosphohexose mutase family. As to quaternary structure, monomer. The cofactor is Mg(2+).

Its subcellular location is the cytoplasm. The enzyme catalyses alpha-D-glucose 1-phosphate = alpha-D-glucose 6-phosphate. It carries out the reaction O-phospho-L-seryl-[protein] + alpha-D-glucose 1-phosphate = alpha-D-glucose 1,6-bisphosphate + L-seryl-[protein]. The catalysed reaction is alpha-D-glucose 1,6-bisphosphate + L-seryl-[protein] = O-phospho-L-seryl-[protein] + alpha-D-glucose 6-phosphate. In terms of biological role, catalyzes the reversible isomerization of alpha-D-glucose 1-phosphate to alpha-D-glucose 6-phosphate. The mechanism proceeds via the intermediate compound alpha-D-glucose 1,6-bisphosphate. Key enzyme in hexose metabolism. The reverse reaction is an essential step for biosynthesis because glucose 1-phosphate is the starting point for the synthesis of UDP-glucose, which acts as a precursor for the synthesis of oligosaccharides and trehalose. The chain is Phosphoglucomutase (pgmA) from Aspergillus oryzae (strain ATCC 42149 / RIB 40) (Yellow koji mold).